The primary structure comprises 593 residues: ATP-dependent lipid A-core flippase (593 aa).

6 helical membrane-spanning segments follow: residues 33 to 53 (IGIV…EAGI), 75 to 95 (WYVP…QYTS), 137 to 157 (AIVF…VTLV), 164 to 184 (IFLL…VAVI), 262 to 282 (QPLT…IAVV), and 292 to 312 (GGFV…KHLI). Positions 37–320 (VLAVVTMGVV…LIDVNQPLQR (284 aa)) constitute an ABC transmembrane type-1 domain. The ABC transporter domain occupies 352-586 (IEFRAVSFDY…GGLYAHLHRI (235 aa)). 386–393 (GPSGSGKT) contributes to the ATP binding site.

This sequence belongs to the ABC transporter superfamily. Lipid exporter (TC 3.A.1.106) family. Homodimer.

Its subcellular location is the cell inner membrane. The catalysed reaction is ATP + H2O + lipid A-core oligosaccharideSide 1 = ADP + phosphate + lipid A-core oligosaccharideSide 2.. Involved in lipopolysaccharide (LPS) biosynthesis. Translocates lipid A-core from the inner to the outer leaflet of the inner membrane. Transmembrane domains (TMD) form a pore in the inner membrane and the ATP-binding domain (NBD) is responsible for energy generation. The chain is ATP-dependent lipid A-core flippase from Burkholderia orbicola (strain AU 1054).